Consider the following 135-residue polypeptide: Small ribosomal subunit protein uS12 (135 aa).

A disordered region spans residues 1-20; sequence MPTINQLVRKGRHSKVTKSK. Residues 9–18 are compositionally biased toward basic residues; the sequence is RKGRHSKVTK. 3-methylthioaspartic acid is present on Asp-102.

It belongs to the universal ribosomal protein uS12 family. In terms of assembly, part of the 30S ribosomal subunit. Contacts proteins S8 and S17. May interact with IF1 in the 30S initiation complex.

Functionally, with S4 and S5 plays an important role in translational accuracy. In terms of biological role, interacts with and stabilizes bases of the 16S rRNA that are involved in tRNA selection in the A site and with the mRNA backbone. Located at the interface of the 30S and 50S subunits, it traverses the body of the 30S subunit contacting proteins on the other side and probably holding the rRNA structure together. The combined cluster of proteins S8, S12 and S17 appears to hold together the shoulder and platform of the 30S subunit. The sequence is that of Small ribosomal subunit protein uS12 from Lactobacillus helveticus (strain DPC 4571).